The sequence spans 63 residues: Cytochrome c oxidase subunit 5C (63 aa).

The helical transmembrane segment at 16-34 (VVKEIFIGLTLGLVAGGMW) threads the bilayer.

The protein belongs to the cytochrome c oxidase subunit 5C family.

Its subcellular location is the mitochondrion inner membrane. Functionally, this protein is one of the nuclear-coded polypeptide chains of cytochrome c oxidase, the terminal oxidase in mitochondrial electron transport. This Hordeum vulgare (Barley) protein is Cytochrome c oxidase subunit 5C (COX5C).